A 930-amino-acid chain; its full sequence is MSKKRLYEIAKELGKESKEVVARAKELGLDVKSHSSSVEEAVAAKIAASFKPAAAPKVEAKPAAPKVSAEKKAEKSEPAKPAVAKEEAKPAEPVAPKTEKVAAKPQSRNFKAEREARAKEQAERRKQNKGNNRDQQQNGNRQKNDGRNGGKQGQSNRDNRRFNDQAKKEQGQQKRRNERRQQEDKRSNQVAPRIDFKARAAALKAEQNAEYARSSEERFKQYQAAKEALAQANKRKEPEEIFEEAAKLAEQAQQVQAVVEVVPEKKEPAVDTRRKKQARPDKNRDDYDHEEDGPRKQQKNRSSQNQVRNQKNSNWNNNKKNKKGNNKNNRNQTPKPVTERKFHELPTEFEYTDGMTVAEIAKRIKREPAEIVKKLFMMGVMATQNQSLDGETIELLMVDYGIEAKQKVEVDNADIERFFVEDGYLNEDELVERPPVVTIMGHVDHGKTTLLDTLRNSRVATGEAGGITQHIGAYQIVENGKKITFLDTPGHAAFTSMRARGASVTDITILVVAADDGVMPQTIEAINHSKAANVPIIVAINKIDKPGANPERVIGELAEHGVMSTAWGGDSEFVEISAKFNQNIEELLETVLLVAEIQELKADPTVRAIGTVIEARLDKGKGAVATLLVQQGTLNVQDPIVVGNTFGRVRAMTNDLGRRVKVAGPSTPVSITGLNEAPMAGDHFAVYEDEKSARAAGEERAKRALMKQRQATQRVSLENLFDTLKAGELKSVNVIIKADVQGSVEALSASLQKIDVEGVKVTIVHSAVGAINESDVTLAEASNAFIVGFNVRPTPQARQQAEADDVEIRLHSIIYKVIEEMEEAMKGMLDPEFEEKVIGEAVIRETFKVSKVGTIGGFMVINGKVARDSKVRVIRDGVVIYDGELASLKHYKDDVKEVTNGREGGLMIDGYNDIKMDDVIEAYVMEEIKR.

Low complexity predominate over residues 50–67; it reads FKPAAAPKVEAKPAAPKV. Disordered stretches follow at residues 50-196 and 260-346; these read FKPA…RIDF and EVVP…HELP. 2 stretches are compositionally biased toward basic and acidic residues: residues 68-90 and 110-125; these read SAEK…EAKP and FKAE…AERR. Residues 129 to 141 show a composition bias toward low complexity; the sequence is KGNNRDQQQNGNR. 2 stretches are compositionally biased toward basic and acidic residues: residues 157–172 and 262–295; these read RDNR…EQGQ and VPEK…DGPR. Over residues 309–318 the composition is skewed to low complexity; it reads NQKNSNWNNN. Residues 337–346 are compositionally biased toward basic and acidic residues; that stretch reads VTERKFHELP. Residues 432-599 form the tr-type G domain; sequence ERPPVVTIMG…TVLLVAEIQE (168 aa). The G1 stretch occupies residues 441 to 448; it reads GHVDHGKT. Position 441-448 (441-448) interacts with GTP; that stretch reads GHVDHGKT. Positions 466–470 are G2; that stretch reads GITQH. The interval 487-490 is G3; that stretch reads DTPG. Residues 487 to 491 and 541 to 544 each bind GTP; these read DTPGH and NKID. The tract at residues 541–544 is G4; it reads NKID. The tract at residues 577–579 is G5; it reads SAK.

This sequence belongs to the TRAFAC class translation factor GTPase superfamily. Classic translation factor GTPase family. IF-2 subfamily.

It localises to the cytoplasm. Functionally, one of the essential components for the initiation of protein synthesis. Protects formylmethionyl-tRNA from spontaneous hydrolysis and promotes its binding to the 30S ribosomal subunits. Also involved in the hydrolysis of GTP during the formation of the 70S ribosomal complex. This is Translation initiation factor IF-2 from Streptococcus pneumoniae serotype 19F (strain G54).